Here is a 544-residue protein sequence, read N- to C-terminus: Homeobox protein B-H1 (544 aa).

The segment covering 53–70 (STTTMSSGGSTTTASGIG) has biased composition (low complexity). 4 disordered regions span residues 53–73 (STTT…GKPN), 92–179 (YKQQ…PPTA), 236–308 (GGVG…AFTD), and 471–544 (AANP…QIQV). Basic residues predominate over residues 95–105 (QQHHQQLHHHN). The span at 106–131 (NNNNSGSSGGSSPAHSNNNNNINGDN) shows a compositional bias: low complexity. Residues 156-172 (THPHTHPHALMHPHGKL) are compositionally biased toward basic residues. Positions 247–262 (DLDDSSDYHEENEDCD) are enriched in acidic residues. The span at 266 to 282 (MDDHSVCSNGGKDDDGN) shows a compositional bias: basic and acidic residues. Over residues 283–293 (SVKSGSTSDMS) the composition is skewed to polar residues. The homeobox DNA-binding region spans 299-358 (QRKARTAFTDHQLQTLEKSFERQKYLSVQERQELAHKLDLSDCQVKTWYQNRRTKWKRQT). The segment covering 476–485 (GPHPVAPPPS) has biased composition (pro residues). Over residues 492–506 (PSGLVKPIPAHSASA) the composition is skewed to low complexity. Residues 507-516 (SPPPRPPSTP) show a composition bias toward pro residues.

Belongs to the Antp homeobox family. In terms of tissue distribution, B-H1 and B-H2 are abundant in the eye-antenna imaginal disk. Expressed in R1 and R6 cells throughout larval stage until 30 hours after puparium formation, at which time expression is seen in the anterior and posterior primary pigment cells. Coexpressed in embryonic glial cells, neurons of the CNS and PNS, most latitudinal anterior cells of the developing notum and the central circular region of the leg and antennal imaginal disk throughout larval development.

It is found in the nucleus. Its function is as follows. B-H1 and B-H2 are regulated by members of the wg signaling pathway; wg and dpp. B-H1 and B-H2 are coexpressed and functionally required in R1 and R6 receptor cells and primary pigment cells for normal eye development. Coexpression is also required for the fate determination of external sensory organs, formation of notal microchaetae, formation of presutural macrochaetae, antennal development and for distal leg morphogenesis; segmentation and specification of tarsal segments 3-5. The protein is Homeobox protein B-H1 (B-H1) of Drosophila melanogaster (Fruit fly).